We begin with the raw amino-acid sequence, 151 residues long: Deoxyuridine 5'-triphosphate nucleotidohydrolase (151 aa).

Substrate-binding positions include 70–72, asparagine 83, 87–89, and methionine 97; these read RSG and LID.

The protein belongs to the dUTPase family. Mg(2+) serves as cofactor.

The enzyme catalyses dUTP + H2O = dUMP + diphosphate + H(+). Its pathway is pyrimidine metabolism; dUMP biosynthesis; dUMP from dCTP (dUTP route): step 2/2. Functionally, this enzyme is involved in nucleotide metabolism: it produces dUMP, the immediate precursor of thymidine nucleotides and it decreases the intracellular concentration of dUTP so that uracil cannot be incorporated into DNA. This is Deoxyuridine 5'-triphosphate nucleotidohydrolase from Histophilus somni (strain 129Pt) (Haemophilus somnus).